The sequence spans 402 residues: Multidrug resistance protein MdtH (402 aa).

The next 11 membrane-spanning stretches (helical) occupy residues 13–33 (YFLL…FPLI), 34–54 (SIRF…ALGL), 99–116 (PWLL…GTLF), 139–159 (LLMM…SWLL), 165–185 (LVCA…AWLL), 214–234 (VLTL…LPIM), 243–263 (AAVK…LYPI), 277–297 (LMAG…VSSV), 300–320 (LFVL…ARET), 340–360 (LGLA…FDSG), and 368–388 (LPWV…WWQF).

It belongs to the major facilitator superfamily. DHA1 family. MdtH (TC 2.A.1.2.21) subfamily.

The protein resides in the cell inner membrane. The sequence is that of Multidrug resistance protein MdtH from Enterobacter sp. (strain 638).